Consider the following 549-residue polypeptide: Zinc finger protein 18 (549 aa).

The SCAN box domain occupies 41–123; that stretch reads RQLFRQFRYQ…TLVESLKGDP (83 aa). The 73-residue stretch at 211 to 283 folds into the KRAB domain; sequence DLGASLLPAA…YLHVNEKIPR (73 aa). 5 consecutive C2H2-type zinc fingers follow at residues 408–430, 436–458, 464–486, 492–514, and 520–542; these read PTCR…QRTH, FQCT…QRTH, CKCD…EKIH, YKCP…QRVH, and YKCS…QRSH.

This sequence belongs to the krueppel C2H2-type zinc-finger protein family.

It localises to the nucleus. Its function is as follows. May be involved in transcriptional regulation. In Homo sapiens (Human), this protein is Zinc finger protein 18 (ZNF18).